The primary structure comprises 147 residues: Large ribosomal subunit protein uL13 (147 aa).

It belongs to the universal ribosomal protein uL13 family. As to quaternary structure, part of the 50S ribosomal subunit.

Its function is as follows. This protein is one of the early assembly proteins of the 50S ribosomal subunit, although it is not seen to bind rRNA by itself. It is important during the early stages of 50S assembly. In Kocuria rhizophila (strain ATCC 9341 / DSM 348 / NBRC 103217 / DC2201), this protein is Large ribosomal subunit protein uL13.